Consider the following 164-residue polypeptide: Class I hydrophobin rodA (164 aa).

The first 18 residues, 1–18 (MQFSISALVLGLAATVYA), serve as a signal peptide directing secretion. Asn50 carries an N-linked (GlcNAc...) asparagine glycan. 4 disulfides stabilise this stretch: Cys60–Cys138, Cys68–Cys132, Cys69–Cys109, and Cys139–Cys157.

It belongs to the fungal hydrophobin family. In terms of assembly, self-assembles to form functional amyloid fibrils called rodlets. Self-assembly into fibrillar rodlets occurs spontaneously at hydrophobic:hydrophilic interfaces and the rodlets further associate laterally to form amphipathic monolayers.

The protein localises to the secreted. The protein resides in the cell wall. Functionally, aerial growth, conidiation, and dispersal of filamentous fungi in the environment rely upon a capability of their secreting small amphipathic proteins called hydrophobins (HPBs) with low sequence identity. Class I can self-assemble into an outermost layer of rodlet bundles on aerial cell surfaces, conferring cellular hydrophobicity that supports fungal growth, development and dispersal; whereas Class II form highly ordered films at water-air interfaces through intermolecular interactions but contribute nothing to the rodlet structure. RodA is a class I hydrophobin involved in the cell surface hydrophobicity. The surface rodlet layer of the conidial cell wall makes airborne conidia of filamentous fungi inert to both innate and adaptive immunity. The sequence is that of Class I hydrophobin rodA from Penicillium camemberti (strain FM 013).